Here is a 53-residue protein sequence, read N- to C-terminus: UPF0391 membrane protein PSEEN0090 (53 aa).

Transmembrane regions (helical) follow at residues 4 to 24 and 29 to 49; these read WAIT…GGIA and GIAK…FFFG.

It belongs to the UPF0391 family.

It localises to the cell membrane. The sequence is that of UPF0391 membrane protein PSEEN0090 from Pseudomonas entomophila (strain L48).